Reading from the N-terminus, the 774-residue chain is Penicillin acylase 2 proenzyme (774 aa).

The active-site Nucleophile is Ser240.

Belongs to the peptidase S45 family. As to quaternary structure, heterodimer of a small subunit and a large subunit processed from the same precursor.

The enzyme catalyses a penicillin + H2O = 6-aminopenicillanate + a carboxylate. This chain is Penicillin acylase 2 proenzyme (acyII), found in Pseudomonas sp. (strain SE83).